A 1388-amino-acid chain; its full sequence is Kinesin-like protein KIF15 (1388 aa).

Residues 1-25 (MAPGCKTELRSVTNGQSNQPSNEGD) are disordered. Polar residues predominate over residues 10–22 (RSVTNGQSNQPSN). Residues 26-363 (AIKVFVRIRP…LNFAQRAKLI (338 aa)) enclose the Kinesin motor domain. ATP is bound at residue 109 to 116 (GQTGSGKT). A coiled-coil region spans residues 368–1388 (VVNEDTQGNV…FLKEKKRSES (1021 aa)). Threonine 399 carries the phosphothreonine modification. Phosphoserine is present on serine 568. The residue at position 1009 (lysine 1009) is an N6-acetyllysine. 2 positions are modified to phosphoserine: serine 1141 and serine 1169. A disordered region spans residues 1228–1250 (QKENSDQNHPDNQQLKNEQEESI).

This sequence belongs to the TRAFAC class myosin-kinesin ATPase superfamily. Kinesin family. KLP2 subfamily. As to quaternary structure, interacts with MKI67 and TPX2. In terms of tissue distribution, expressed in testis, colon, thymus and in breast cancer.

It is found in the cytoplasm. The protein localises to the cytoskeleton. The protein resides in the spindle. Plus-end directed kinesin-like motor enzyme involved in mitotic spindle assembly. The protein is Kinesin-like protein KIF15 (KIF15) of Homo sapiens (Human).